The following is a 283-amino-acid chain: Pantothenate synthetase (283 aa).

33-40 (MGALHEGH) is a binding site for ATP. The active-site Proton donor is His-40. Residue Gln-64 coordinates (R)-pantoate. Gln-64 lines the beta-alanine pocket. 150–153 (GEKD) serves as a coordination point for ATP. Gln-156 contributes to the (R)-pantoate binding site. ATP contacts are provided by residues Ile-179 and 187 to 190 (MSSR).

The protein belongs to the pantothenate synthetase family. In terms of assembly, homodimer.

It is found in the cytoplasm. The enzyme catalyses (R)-pantoate + beta-alanine + ATP = (R)-pantothenate + AMP + diphosphate + H(+). It functions in the pathway cofactor biosynthesis; (R)-pantothenate biosynthesis; (R)-pantothenate from (R)-pantoate and beta-alanine: step 1/1. In terms of biological role, catalyzes the condensation of pantoate with beta-alanine in an ATP-dependent reaction via a pantoyl-adenylate intermediate. The protein is Pantothenate synthetase of Mesorhizobium japonicum (strain LMG 29417 / CECT 9101 / MAFF 303099) (Mesorhizobium loti (strain MAFF 303099)).